A 133-amino-acid polypeptide reads, in one-letter code: Small ribosomal subunit protein uS8 (133 aa).

The protein belongs to the universal ribosomal protein uS8 family. In terms of assembly, part of the 30S ribosomal subunit. Contacts proteins S5 and S12.

In terms of biological role, one of the primary rRNA binding proteins, it binds directly to 16S rRNA central domain where it helps coordinate assembly of the platform of the 30S subunit. In Orientia tsutsugamushi (strain Ikeda) (Rickettsia tsutsugamushi), this protein is Small ribosomal subunit protein uS8.